The chain runs to 381 residues: Cytochrome b (381 aa).

4 consecutive transmembrane segments (helical) span residues Phe-31 to Met-51, Trp-75 to Phe-97, Val-112 to Val-132, and Phe-178 to Ala-198. 2 residues coordinate heme b: His-81 and His-95. Heme b is bound by residues His-182 and His-196. His-201 is an a ubiquinone binding site. The next 4 membrane-spanning stretches (helical) occupy residues Phe-224–Tyr-244, Leu-288–His-308, Leu-320–Gly-340, and Tyr-347–Pro-367.

It belongs to the cytochrome b family. In terms of assembly, the main subunits of complex b-c1 are: cytochrome b, cytochrome c1 and the Rieske protein. Requires heme b as cofactor.

Its subcellular location is the mitochondrion inner membrane. Its function is as follows. Component of the ubiquinol-cytochrome c reductase complex (complex III or cytochrome b-c1 complex) that is part of the mitochondrial respiratory chain. The b-c1 complex mediates electron transfer from ubiquinol to cytochrome c. Contributes to the generation of a proton gradient across the mitochondrial membrane that is then used for ATP synthesis. The chain is Cytochrome b (MT-CYB) from Chondrus crispus (Carrageen Irish moss).